The primary structure comprises 142 residues: Hemoglobin subunit alpha-1 (142 aa).

Residues 2–142 enclose the Globin domain; it reads LLSADDKKHI…VSTVLTSKYR (141 aa). H59 provides a ligand contact to O2. Residue H88 participates in heme b binding.

Belongs to the globin family. Heterotetramer of two alpha chains and two beta chains. Red blood cells.

Functionally, involved in oxygen transport from the lung to the various peripheral tissues. This Xenopus laevis (African clawed frog) protein is Hemoglobin subunit alpha-1 (hba1).